The chain runs to 1482 residues: Chromosome partition protein MukB (1482 aa).

An ATP-binding site is contributed by glycine 34–serine 41. Residues alanine 333 to glutamine 665 adopt a coiled-coil conformation. The interval proline 666–arginine 783 is flexible hinge. 2 coiled-coil regions span residues glutamate 784 to glycine 1116 and valine 1209 to glutamine 1260.

It belongs to the SMC family. MukB subfamily. In terms of assembly, homodimerization via its hinge domain. Binds to DNA via its C-terminal region. Interacts, and probably forms a ternary complex, with MukE and MukF via its C-terminal region. The complex formation is stimulated by calcium or magnesium. Interacts with tubulin-related protein FtsZ.

The protein localises to the cytoplasm. It localises to the nucleoid. Plays a central role in chromosome condensation, segregation and cell cycle progression. Functions as a homodimer, which is essential for chromosome partition. Involved in negative DNA supercoiling in vivo, and by this means organize and compact chromosomes. May achieve or facilitate chromosome segregation by condensation DNA from both sides of a centrally located replisome during cell division. This is Chromosome partition protein MukB from Photorhabdus laumondii subsp. laumondii (strain DSM 15139 / CIP 105565 / TT01) (Photorhabdus luminescens subsp. laumondii).